A 158-amino-acid chain; its full sequence is Phosphopantetheine adenylyltransferase (158 aa).

Substrate is bound at residue threonine 9. Residues 9-10 (TF) and histidine 17 contribute to the ATP site. Residues lysine 41, leucine 73, and arginine 87 each contribute to the substrate site. ATP contacts are provided by residues 88 to 90 (GLR), glutamate 98, and 123 to 129 (YAYISSS).

Belongs to the bacterial CoaD family. Homohexamer. It depends on Mg(2+) as a cofactor.

The protein resides in the cytoplasm. The catalysed reaction is (R)-4'-phosphopantetheine + ATP + H(+) = 3'-dephospho-CoA + diphosphate. Its pathway is cofactor biosynthesis; coenzyme A biosynthesis; CoA from (R)-pantothenate: step 4/5. Its function is as follows. Reversibly transfers an adenylyl group from ATP to 4'-phosphopantetheine, yielding dephospho-CoA (dPCoA) and pyrophosphate. This Allochromatium vinosum (strain ATCC 17899 / DSM 180 / NBRC 103801 / NCIMB 10441 / D) (Chromatium vinosum) protein is Phosphopantetheine adenylyltransferase.